Reading from the N-terminus, the 211-residue chain is Protein-L-isoaspartate O-methyltransferase 1 (211 aa).

Residue Ser-62 is part of the active site.

This sequence belongs to the methyltransferase superfamily. L-isoaspartyl/D-aspartyl protein methyltransferase family.

It is found in the cytoplasm. It carries out the reaction [protein]-L-isoaspartate + S-adenosyl-L-methionine = [protein]-L-isoaspartate alpha-methyl ester + S-adenosyl-L-homocysteine. Catalyzes the methyl esterification of L-isoaspartyl residues in peptides and proteins that result from spontaneous decomposition of normal L-aspartyl and L-asparaginyl residues. It plays a role in the repair and/or degradation of damaged proteins. The polypeptide is Protein-L-isoaspartate O-methyltransferase 1 (Shewanella sediminis (strain HAW-EB3)).